A 428-amino-acid polypeptide reads, in one-letter code: Probable pectin lyase F (428 aa).

Residues 1 to 20 form the signal peptide; sequence MVLLHPLLTAAALLGASARA. Cysteines 83 and 107 form a disulfide. R257 is an active-site residue. N276 is a glycosylation site (N-linked (GlcNAc...) asparagine). Residues C324 and C332 are joined by a disulfide bond. Disordered regions lie at residues 337–367 and 383–428; these read LTSS…MTTD and GSGG…HHHY. Residues 389–417 are compositionally biased toward low complexity; it reads AASSSASITPSPTSSAIPSSSATPSSSAY. Basic residues predominate over residues 418-428; it reads ARRHYARHHHY.

This sequence belongs to the polysaccharide lyase 1 family.

The protein resides in the secreted. It catalyses the reaction Eliminative cleavage of (1-&gt;4)-alpha-D-galacturonan methyl ester to give oligosaccharides with 4-deoxy-6-O-methyl-alpha-D-galact-4-enuronosyl groups at their non-reducing ends.. Functionally, pectinolytic enzymes consist of four classes of enzymes: pectin lyase, polygalacturonase, pectin methylesterase and rhamnogalacturonase. Among pectinolytic enzymes, pectin lyase is the most important in depolymerization of pectin, since it cleaves internal glycosidic bonds of highly methylated pectins. The sequence is that of Probable pectin lyase F (pelF) from Aspergillus flavus (strain ATCC 200026 / FGSC A1120 / IAM 13836 / NRRL 3357 / JCM 12722 / SRRC 167).